The following is a 101-amino-acid chain: Small ribosomal subunit protein uS14 (101 aa).

It belongs to the universal ribosomal protein uS14 family. As to quaternary structure, part of the 30S ribosomal subunit. Contacts proteins S3 and S10.

Its function is as follows. Binds 16S rRNA, required for the assembly of 30S particles and may also be responsible for determining the conformation of the 16S rRNA at the A site. The sequence is that of Small ribosomal subunit protein uS14 from Bartonella quintana (strain Toulouse) (Rochalimaea quintana).